A 354-amino-acid chain; its full sequence is DnaJ homolog shv (354 aa).

A signal peptide spans 1 to 22; it reads MQLIKCLVIIQLSLLLVEESFA. Residues 25 to 90 enclose the J domain; sequence DFYKILNVKK…DKRKTYDRCG (66 aa). Residues N260 and N312 are each glycosylated (N-linked (GlcNAc...) asparagine).

In terms of tissue distribution, in the testes, detected at low levels in somatic hub cells, cyst stem cells and the apical tip (at protein level). Levels in the testes decrease with age (at protein level). Expressed at low levels in hub cells, cyst stem cells and germline stem cells, and at high levels in spermatocytes and cyst cells.

The protein localises to the nucleus. It localises to the cell membrane. Its subcellular location is the secreted. In terms of biological role, maintains stem cell niche architecture in the testes. Activates an extracellular integrin beta-PS pathway which regulates DE-cadherin (shg) levels in somatic hub cells, and is essential for maintaining the number of germline stem cells and the structure and localization of hub cells. The protein is DnaJ homolog shv of Drosophila melanogaster (Fruit fly).